Here is a 599-residue protein sequence, read N- to C-terminus: Cartilage intermediate layer protein 1 (599 aa).

Asn47, Asn416, and Asn472 each carry an N-linked (GlcNAc...) asparagine glycan. Residues 550-560 (QSTSARPSPAS) show a composition bias toward polar residues. Positions 550-599 (QSTSARPSPASTVRGRAPSRRQRASSGSQRQPRGVASLRFPGVAQQPLSN) are disordered. Low complexity predominate over residues 573–583 (ASSGSQRQPRG).

As to quaternary structure, monomer. Interacts with TGFB1. In terms of processing, cleaved into 2 chains possibly by a furin-like protease upon or preceding secretion. In terms of tissue distribution, specifically expressed in cartilage. Expressed at lower level in young cartilage than in adult cartilage. In adult cartilage, it is highly expressed throughout middeep zones.

The protein resides in the secreted. It is found in the extracellular space. The protein localises to the extracellular matrix. Its function is as follows. Probably plays a role in cartilage scaffolding. May act by antagonizing TGF-beta1 (TGFB1) and IGF1 functions. Has the ability to suppress IGF1-induced proliferation and sulfated proteoglycan synthesis, and inhibits ligand-induced IGF1R autophosphorylation. May inhibit TGFB1-mediated induction of cartilage matrix genes via its interaction with TGFB1. Overexpression may lead to impair chondrocyte growth and matrix repair and indirectly promote inorganic pyrophosphate (PPi) supersaturation in aging and osteoarthritis cartilage. This chain is Cartilage intermediate layer protein 1 (CILP), found in Sus scrofa (Pig).